A 228-amino-acid chain; its full sequence is Ribulose-phosphate 3-epimerase (228 aa).

Ser9 provides a ligand contact to substrate. 3 residues coordinate a divalent metal cation: His34, Asp36, and His70. Residue Asp36 is the Proton acceptor of the active site. Substrate-binding positions include His70, 146–149, 175–177, and 197–198; these read GKGG, DGG, and GT. A divalent metal cation is bound at residue Asp175. Asp175 (proton donor) is an active-site residue.

The protein belongs to the ribulose-phosphate 3-epimerase family. The cofactor is Co(2+). Requires Fe(2+) as cofactor. Mn(2+) serves as cofactor. It depends on Zn(2+) as a cofactor.

It carries out the reaction D-ribulose 5-phosphate = D-xylulose 5-phosphate. It participates in carbohydrate degradation; pentose phosphate pathway; D-xylulose 5-phosphate from D-ribulose 5-phosphate (non-oxidative stage): step 1/1. Catalyzes the reversible epimerization of D-ribulose 5-phosphate to D-xylulose 5-phosphate. This chain is Ribulose-phosphate 3-epimerase, found in Schizosaccharomyces pombe (strain 972 / ATCC 24843) (Fission yeast).